The primary structure comprises 199 residues: NAD(P)H dehydrogenase (quinone) (199 aa).

Positions 4 to 190 (ILVLYYSMYG…TIARYQGEHV (187 aa)) constitute a Flavodoxin-like domain. FMN contacts are provided by residues 10–15 (SMYGHI) and 79–81 (TRF). NAD(+) is bound at residue Y12. Residue W99 participates in substrate binding. FMN contacts are provided by residues 114–119 (STGTGG) and H134.

It belongs to the WrbA family. It depends on FMN as a cofactor.

The catalysed reaction is a quinone + NADH + H(+) = a quinol + NAD(+). The enzyme catalyses a quinone + NADPH + H(+) = a quinol + NADP(+). The sequence is that of NAD(P)H dehydrogenase (quinone) from Serratia proteamaculans (strain 568).